The sequence spans 772 residues: MATLKDIGVSAGINILTAFIFFIIFAFLRLQPFNDRVYFSKWYLRGLRSSPASGGGFAGRFVNLELRSYLKFLHWMPEALKMPERELIDHAGLDSVVYLRIYWLGLKIFAPIAMLAWAVLVPVNWTNNELELAKHFKNVTSSDIDKLTISNIPEGSNRFWAHIIMAYAFTIWTCYMLMKEYETVANMRLQFLASEGRRPDQFTVLVRNVPPDPDETVSELVEHFFLVNHPDNYLTHQVVCNANKLADLVSKKTKLQNWLDYYQLKYTRNNSQIRPITKLGCLGLCGQKVDAIEHYIAEVDKTSKEIAEERENVVNDQKSVMPASFVSFKTRWAAAVCAQTTQTRNPTEWLTEWAAEPRDIYWPNLAIPYVSLTVRRLVMNVAFFFLTFFFIIPIAFVQSLATIEGIEKVAPFLKVIIEKDFIKSLIQGLLAGIALKLFLIFLPAILMTMSKFEGFTSVSFLERRSASRYYIFNLVNVFLGSVIAGAAFEQLNSFLNQSPNQIPKTIGMAIPMKATFFITYIMVDGWAGVAGEILMLKPLIIYHLKNAFLVKTEKDREEAMNPGSIGFNTGEPQIQLYFLLGLVYAPVTPMLLPFILVFFALAYVVYRHQIINVYNQEYESAAAFWPDVHGRVITALIISQLLLMGLLGTKHAASAAPFLIALPVITIGFHRFCKGRFEPAFVRYPLQEAMMKDTLERAREPNLNLKGYLQDAYIHPVFKGGDNDDDGDMIGKLENEVIIVPTKRQSRRNTPAPSRISGESSPSLAVINGKEV.

Residues 1-5 lie on the Extracellular side of the membrane; that stretch reads MATLK. The chain crosses the membrane as a helical span at residues 6–28; the sequence is DIGVSAGINILTAFIFFIIFAFL. The Cytoplasmic portion of the chain corresponds to 29–100; sequence RLQPFNDRVY…AGLDSVVYLR (72 aa). A helical transmembrane segment spans residues 101 to 122; that stretch reads IYWLGLKIFAPIAMLAWAVLVP. The Extracellular portion of the chain corresponds to 123–159; sequence VNWTNNELELAKHFKNVTSSDIDKLTISNIPEGSNRF. Asn-138 carries an N-linked (GlcNAc) asparagine glycan. A helical membrane pass occupies residues 160–180; sequence WAHIIMAYAFTIWTCYMLMKE. The Cytoplasmic segment spans residues 181–372; that stretch reads YETVANMRLQ…PNLAIPYVSL (192 aa). Residues 339 to 344 are cytoplasmic region required for homodimerization; that stretch reads QTTQTR. The helical transmembrane segment at 373–398 threads the bilayer; that stretch reads TVRRLVMNVAFFFLTFFFIIPIAFVQ. The Extracellular segment spans residues 399–424; it reads SLATIEGIEKVAPFLKVIIEKDFIKS. Residues 425-450 form a helical membrane-spanning segment; the sequence is LIQGLLAGIALKLFLIFLPAILMTMS. The Cytoplasmic portion of the chain corresponds to 451–461; the sequence is KFEGFTSVSFL. Residues 462-485 form a helical membrane-spanning segment; the sequence is ERRSASRYYIFNLVNVFLGSVIAG. At 486-509 the chain is on the extracellular side; it reads AAFEQLNSFLNQSPNQIPKTIGMA. Residues 510 to 538 traverse the membrane as a helical segment; the sequence is IPMKATFFITYIMVDGWAGVAGEILMLKP. Residues 539–566 lie on the Cytoplasmic side of the membrane; that stretch reads LIIYHLKNAFLVKTEKDREEAMNPGSIG. A helical membrane pass occupies residues 567–587; the sequence is FNTGEPQIQLYFLLGLVYAPV. Position 588 (Thr-588) is a topological domain, extracellular. Residues 589 to 606 form a helical membrane-spanning segment; the sequence is PMLLPFILVFFALAYVVY. The Cytoplasmic portion of the chain corresponds to 607–624; sequence RHQIINVYNQEYESAAAF. A helical membrane pass occupies residues 625–647; sequence WPDVHGRVITALIISQLLLMGLL. Over 648 to 653 the chain is Extracellular; sequence GTKHAA. The chain crosses the membrane as a helical span at residues 654-674; the sequence is SAAPFLIALPVITIGFHRFCK. Over 675–772 the chain is Cytoplasmic; it reads GRFEPAFVRY…SLAVINGKEV (98 aa). The interval 686–688 is cytoplasmic region required for homodimerization; that stretch reads LQE. Residues 743 to 772 are disordered; sequence KRQSRRNTPAPSRISGESSPSLAVINGKEV. Polar residues predominate over residues 748 to 763; sequence RNTPAPSRISGESSPS.

Belongs to the CSC1 (TC 1.A.17) family. In terms of assembly, homodimer. In terms of tissue distribution, expressed in leaves, flowers, roots and guard cells.

The protein resides in the cell membrane. With respect to regulation, activated by mechanical pressure. Its function is as follows. Acts as a hyperosmolarity-gated non-selective cation channel that permeates Ca(2+) ions. Shows the following permeability sequence: K(+) &gt; Ba(2+) = Ca(2+) &gt; Na(+) = Mg(2+) = Cs(+). Mechanosensitive ion channel that converts mechanical stimuli into a flow of ions: activated in response to membrane stretch and poke. The protein is Hyperosmolality-gated Ca2+ permeable channel 1.1 of Arabidopsis thaliana (Mouse-ear cress).